We begin with the raw amino-acid sequence, 624 residues long: Glycosyltransferase AglD (624 aa).

D201 is a catalytic residue. A run of 8 helical transmembrane segments spans residues 260-280 (VTIV…TLYI), 285-305 (VISV…VIYV), 381-401 (LLTI…TGGL), 427-447 (AAYV…GIAL), 496-518 (VGLT…LLAL), 532-552 (FFAV…GGVG), 556-576 (IAFT…ALAA), and 587-607 (VTIV…TTAV).

It belongs to the glycosyltransferase 2 family.

It localises to the cell membrane. It participates in cell surface structure biogenesis; S-layer biogenesis. In terms of biological role, involved in the assembly of a N-linked pentasaccharide that decorates the S-layer glycoprotein and flagellins. Catalyzes the addition of the mannose found at position 5 of the pentasaccharide to its own distinct dolichol phosphate carrier. This Haloferax volcanii (strain ATCC 29605 / DSM 3757 / JCM 8879 / NBRC 14742 / NCIMB 2012 / VKM B-1768 / DS2) (Halobacterium volcanii) protein is Glycosyltransferase AglD (aglD).